The chain runs to 106 residues: Protein yippee-like At4g27745 (106 aa).

The 98-residue stretch at 8–105 folds into the Yippee domain; it reads RLYSCCNCRN…FEKAKIVKED (98 aa). Positions 12, 15, 68, and 71 each coordinate Zn(2+).

Belongs to the yippee family.

The sequence is that of Protein yippee-like At4g27745 from Arabidopsis thaliana (Mouse-ear cress).